We begin with the raw amino-acid sequence, 561 residues long: uncharacterized protein (561 aa).

The segment covering 314-323 has biased composition (low complexity); sequence ANNGSGDSSS. The segment at 314 to 366 is disordered; it reads ANNGSGDSSSTALNNESPNTTPKSRTFFSPKGHRRNSSHVSSLTSRSTKKPIT. Positions 324-340 are enriched in polar residues; it reads TALNNESPNTTPKSRTF. The residue at position 514 (serine 514) is a Phosphoserine.

It localises to the cytoplasm. This is an uncharacterized protein from Saccharomyces cerevisiae (strain ATCC 204508 / S288c) (Baker's yeast).